Reading from the N-terminus, the 314-residue chain is Methionyl-tRNA formyltransferase (314 aa).

Residue 110–113 participates in (6S)-5,6,7,8-tetrahydrofolate binding; that stretch reads SLLP.

The protein belongs to the Fmt family.

It carries out the reaction L-methionyl-tRNA(fMet) + (6R)-10-formyltetrahydrofolate = N-formyl-L-methionyl-tRNA(fMet) + (6S)-5,6,7,8-tetrahydrofolate + H(+). In terms of biological role, attaches a formyl group to the free amino group of methionyl-tRNA(fMet). The formyl group appears to play a dual role in the initiator identity of N-formylmethionyl-tRNA by promoting its recognition by IF2 and preventing the misappropriation of this tRNA by the elongation apparatus. This chain is Methionyl-tRNA formyltransferase, found in Lactobacillus gasseri (strain ATCC 33323 / DSM 20243 / BCRC 14619 / CIP 102991 / JCM 1131 / KCTC 3163 / NCIMB 11718 / NCTC 13722 / AM63).